The sequence spans 407 residues: Na(+)-translocating NADH-quinone reductase subunit F (407 aa).

Residues 3 to 23 form a helical membrane-spanning segment; it reads ITLGIAMFTVIVLALAVIILF. Residues 32 to 126 enclose the 2Fe-2S ferredoxin-type domain; that stretch reads GDITIEINDD…SMKVELPEEV (95 aa). Residues Cys-69, Cys-75, Cys-78, and Cys-110 each contribute to the [2Fe-2S] cluster site. The FAD-binding FR-type domain occupies 129-269; it reads VKKWECTVIS…SGPFGEFFAK (141 aa). Positions 272–389 are catalytic; that stretch reads DAEMVFVGGG…PIMNASVIKM (118 aa).

It belongs to the NqrF family. As to quaternary structure, composed of six subunits; NqrA, NqrB, NqrC, NqrD, NqrE and NqrF. It depends on [2Fe-2S] cluster as a cofactor. The cofactor is FAD.

The protein localises to the cell inner membrane. The catalysed reaction is a ubiquinone + n Na(+)(in) + NADH + H(+) = a ubiquinol + n Na(+)(out) + NAD(+). NQR complex catalyzes the reduction of ubiquinone-1 to ubiquinol by two successive reactions, coupled with the transport of Na(+) ions from the cytoplasm to the periplasm. The first step is catalyzed by NqrF, which accepts electrons from NADH and reduces ubiquinone-1 to ubisemiquinone by a one-electron transfer pathway. This Pasteurella multocida (strain Pm70) protein is Na(+)-translocating NADH-quinone reductase subunit F.